The chain runs to 626 residues: Carnitine O-acetyltransferase (626 aa).

Lys93 carries the N6-succinyllysine modification. Lys261 carries the N6-acetyllysine; alternate modification. At Lys261 the chain carries N6-succinyllysine; alternate. Lys268 is subject to N6-acetyllysine. The active-site Proton acceptor is the His343. CoA is bound by residues Lys419 and 423–430 (KSEKLSPD). (R)-carnitine contacts are provided by Tyr452 and Ser454. Ser456 is a CoA binding site. Thr465 is a binding site for (R)-carnitine. CoA is bound by residues Arg504 and Gln555. Residues 624-626 (AKL) carry the Microbody targeting signal motif.

The protein belongs to the carnitine/choline acetyltransferase family. In terms of assembly, monomer.

The protein resides in the endoplasmic reticulum. The protein localises to the peroxisome. Its subcellular location is the mitochondrion inner membrane. The catalysed reaction is (R)-carnitine + acetyl-CoA = O-acetyl-(R)-carnitine + CoA. It carries out the reaction propanoyl-CoA + (R)-carnitine = O-propanoyl-(R)-carnitine + CoA. The enzyme catalyses butanoyl-CoA + (R)-carnitine = O-butanoyl-(R)-carnitine + CoA. It catalyses the reaction hexanoyl-CoA + (R)-carnitine = O-hexanoyl-(R)-carnitine + CoA. The catalysed reaction is octanoyl-CoA + (R)-carnitine = O-octanoyl-(R)-carnitine + CoA. It carries out the reaction decanoyl-CoA + (R)-carnitine = O-decanoyl-(R)-carnitine + CoA. The enzyme catalyses 3-methylbutanoyl-CoA + (R)-carnitine = O-3-methylbutanoyl-(R)-carnitine + CoA. It catalyses the reaction 2-methylpropanoyl-CoA + (R)-carnitine = O-isobutanoyl-(R)-carnitine + CoA. The catalysed reaction is 2-methylbutanoyl-CoA + (R)-carnitine = O-2-methylbutanoyl-(R)-carnitine + CoA. It carries out the reaction acetoacetyl-CoA + (R)-carnitine = O-3-oxobutanoyl-(R)-carnitine + CoA. The enzyme catalyses 3-hydroxybutanoyl-CoA + (R)-carnitine = O-3-hydroxybutanoyl-(R)-carnitine + CoA. It catalyses the reaction 4,8-dimethylnonanoyl-CoA + (R)-carnitine = O-4,8-dimethylnonanoyl-(R)-carnitine + CoA. The catalysed reaction is 2,6-dimethylheptanoyl-CoA + (R)-carnitine = O-2,6-dimethylheptanoyl-(R)-carnitine + CoA. Catalyzes the reversible transfer of acyl groups from carnitine to coenzyme A (CoA) and regulates the acyl-CoA/CoA ratio. Also plays a crucial role in the transport of fatty acids for beta-oxidation. Responsible for the synthesis of short- and branched-chain acylcarnitines. Active towards some branched-chain amino acid oxidation pathway (BCAAO) intermediates. Trans-2-enoyl-CoAs and 2-methylacyl-CoAs are poor substrates. This chain is Carnitine O-acetyltransferase, found in Mus musculus (Mouse).